The chain runs to 200 residues: Probable molybdenum cofactor guanylyltransferase (200 aa).

GTP contacts are provided by residues 9 to 11, Lys21, Asp69, and Asp100; that span reads LAG. Asp100 contributes to the Mg(2+) binding site.

Belongs to the MobA family. The cofactor is Mg(2+).

It is found in the cytoplasm. It carries out the reaction Mo-molybdopterin + GTP + H(+) = Mo-molybdopterin guanine dinucleotide + diphosphate. Transfers a GMP moiety from GTP to Mo-molybdopterin (Mo-MPT) cofactor (Moco or molybdenum cofactor) to form Mo-molybdopterin guanine dinucleotide (Mo-MGD) cofactor. This is Probable molybdenum cofactor guanylyltransferase from Bacillus cereus (strain AH820).